The following is a 544-amino-acid chain: Probable protein kinase UbiB (544 aa).

One can recognise a Protein kinase domain in the interval 123 to 501 (DFDLVPLASA…KRQQATGKFL (379 aa)). Residues 129-137 (LASASIAQV) and Lys-152 contribute to the ATP site. The active-site Proton acceptor is the Asp-287. A run of 2 helical transmembrane segments spans residues 496–516 (ATGKFLFGVGATLVVCSAILV) and 519–539 (TYEQLSLATAIAGVTFWLFSW).

This sequence belongs to the ABC1 family. UbiB subfamily.

The protein localises to the cell inner membrane. The protein operates within cofactor biosynthesis; ubiquinone biosynthesis [regulation]. Its function is as follows. Is probably a protein kinase regulator of UbiI activity which is involved in aerobic coenzyme Q (ubiquinone) biosynthesis. This Vibrio vulnificus (strain YJ016) protein is Probable protein kinase UbiB.